Here is a 432-residue protein sequence, read N- to C-terminus: MTKSAELYQKAQTTIPGGVNSPVRAFNGVGGSPIFIDRADGALIFDADGKAYIDYVGSWGPMILGHNHAVIREAVIQAAQRGLSFGAPTEMEITMAELVSELVPSMEQLRMVNSGTEATMSAIRLARGYTGRDKIIKFEGCYHGHADSLLVKAGSGALTLGQPSSPGVPADFAKHTLTARFNDLDSVRELFAANQGEIACIIVEPVAGNMNCIPPVEGFHEGLREICDQEGALLIFDEVMTGFRVALGGAQAHYNIKPDLTTLGKVIGGGMPVGAFGGRREVMQYIAPTGPVYQAGTLSGNPIAMAAGYACLNLLREEGNEKRLAAKTKQLADGFKSLADQHGIPLLVHQVGGMFGFFFTEQETVTCYEDVARCDVERFKRFFHLMLQHGVYLAPSAFEASFTSLAHGSKEIEATLEAADRSFAILAAEAKA.

Lys-265 carries the post-translational modification N6-(pyridoxal phosphate)lysine.

This sequence belongs to the class-III pyridoxal-phosphate-dependent aminotransferase family. HemL subfamily. In terms of assembly, homodimer. Requires pyridoxal 5'-phosphate as cofactor.

It localises to the cytoplasm. The catalysed reaction is (S)-4-amino-5-oxopentanoate = 5-aminolevulinate. The protein operates within porphyrin-containing compound metabolism; protoporphyrin-IX biosynthesis; 5-aminolevulinate from L-glutamyl-tRNA(Glu): step 2/2. The chain is Glutamate-1-semialdehyde 2,1-aminomutase from Vibrio cholerae serotype O1 (strain ATCC 39541 / Classical Ogawa 395 / O395).